The following is a 415-amino-acid chain: Gamma-glutamyl phosphate reductase (415 aa).

Belongs to the gamma-glutamyl phosphate reductase family.

It localises to the cytoplasm. It catalyses the reaction L-glutamate 5-semialdehyde + phosphate + NADP(+) = L-glutamyl 5-phosphate + NADPH + H(+). The protein operates within amino-acid biosynthesis; L-proline biosynthesis; L-glutamate 5-semialdehyde from L-glutamate: step 2/2. Catalyzes the NADPH-dependent reduction of L-glutamate 5-phosphate into L-glutamate 5-semialdehyde and phosphate. The product spontaneously undergoes cyclization to form 1-pyrroline-5-carboxylate. The polypeptide is Gamma-glutamyl phosphate reductase (Ligilactobacillus salivarius (strain UCC118) (Lactobacillus salivarius)).